A 300-amino-acid polypeptide reads, in one-letter code: MSAHIIDGKAAAARVLQQVRHDVNILKAEGIEPALAVILVGNDAASEVYVRNKILRAGEAGIRSLEHRLPADSSQARLLALIAELNADNTVNGILLQLPLPAHIDENRVLQAIDPDKDVDGFHSENVGGLSQGRNVLTPCTPSGCLHLLEETCGDLSGKHAVVIGRSNIVGKPMAALLLQAHCSVTVVHSRSTDARALCQLADIVVAAVGRPRLIDASWLKRGAVVIDVGINRIEDHGRSRLVGDVDFASATEVASAITPVPGGVGPMTIAFLMKNTVTAARQQAHAQRSQPEAVCLSTY.

Residues 165 to 167 (GRS), Ser190, and Ile231 contribute to the NADP(+) site.

It belongs to the tetrahydrofolate dehydrogenase/cyclohydrolase family. Homodimer.

The enzyme catalyses (6R)-5,10-methylene-5,6,7,8-tetrahydrofolate + NADP(+) = (6R)-5,10-methenyltetrahydrofolate + NADPH. It catalyses the reaction (6R)-5,10-methenyltetrahydrofolate + H2O = (6R)-10-formyltetrahydrofolate + H(+). It functions in the pathway one-carbon metabolism; tetrahydrofolate interconversion. Functionally, catalyzes the oxidation of 5,10-methylenetetrahydrofolate to 5,10-methenyltetrahydrofolate and then the hydrolysis of 5,10-methenyltetrahydrofolate to 10-formyltetrahydrofolate. This Pseudomonas syringae pv. syringae (strain B728a) protein is Bifunctional protein FolD 2.